Here is a 273-residue protein sequence, read N- to C-terminus: Testis-specific serine/threonine-protein kinase 6 (273 aa).

Residues Tyr12–Leu267 form the Protein kinase domain. ATP contacts are provided by residues Ile18–Val26 and Lys41. Asp135 functions as the Proton acceptor in the catalytic mechanism.

This sequence belongs to the protein kinase superfamily. CAMK Ser/Thr protein kinase family. As to quaternary structure, microtubule inner protein component of sperm flagellar doublet microtubules. Interacts with HSP90; this interaction stabilizes and activates TSSK6. Interacts with the heat shock proteins HSPCB, HSPA8 and HSPA1A. These interactions appear to be required for TSSK6 kinase activity. Interacts with TSACC; this interaction is direct and recruits TSACC to HSP90, which is essential for kinase activity. Mg(2+) serves as cofactor. Post-translationally, autophosphorylated. In terms of processing, ubiquitinated; HSP90 activity negatively regulates ubiquitination and degradation. Highly expressed in testis. Expressed at lower levels in colon, small intestine, ovary, prostate, thymus, spleen and peripheral blood leukocytes.

The protein localises to the cytoplasm. The protein resides in the cytoskeleton. It localises to the flagellum axoneme. Its subcellular location is the nucleus. The enzyme catalyses L-seryl-[protein] + ATP = O-phospho-L-seryl-[protein] + ADP + H(+). It catalyses the reaction L-threonyl-[protein] + ATP = O-phospho-L-threonyl-[protein] + ADP + H(+). In terms of biological role, serine/threonine-protein kinase component of the sperm flagellar doublet microtubules. May act as a regulator of sperm motility by mediating phosphorylation of sperm doublet microtubule proteins. Plays a role in DNA condensation during postmeiotic chromatin remodeling and histone-to-protamine transition during spermatogenesis. The chain is Testis-specific serine/threonine-protein kinase 6 from Homo sapiens (Human).